The following is a 594-amino-acid chain: Cationic amino acid transporter 1 (594 aa).

Ala2 carries the N-acetylalanine modification. Residues 2–78 lie on the Cytoplasmic side of the membrane; the sequence is ASGGGDDGLR…EMKKTLTWWD (77 aa). Residues 79–99 traverse the membrane as a helical segment; the sequence is LMWFGIGAVIGSGIFVLTGLE. Topologically, residues 100-104 are extracellular; sequence ARNHS. The N-linked (GlcNAc...) asparagine glycan is linked to Asn102. Residues 105 to 125 form a helical membrane-spanning segment; it reads GPAVVLSYVVSGVSAMLSVFC. Topologically, residues 126–149 are cytoplasmic; sequence YTEFAVEIPVAGGSFAYLRVELGD. A helical membrane pass occupies residues 150-170; sequence FMAFIAAGNIILEYVVGGAAV. The Extracellular portion of the chain corresponds to 171–201; it reads ARSWTSYFATLLNHKPEDFRIIVHKLGEDYS. A helical membrane pass occupies residues 202-222; that stretch reads HLDPIAVGVCAIICVLAVVGT. Over 223–227 the chain is Cytoplasmic; the sequence is KGSSR. Residues 228 to 248 form a helical membrane-spanning segment; it reads FNYIASIIHMVVILFVIIAGF. Over 249 to 266 the chain is Extracellular; the sequence is TKADVKNYSDFTPYGVRG. Asn255 carries an N-linked (GlcNAc...) asparagine glycan. A helical transmembrane segment spans residues 267–287; that stretch reads VFKSAAVLFFAYIGFDAVSTM. The Cytoplasmic portion of the chain corresponds to 288–297; it reads AEETKNPGRD. Residues 298–318 form a helical membrane-spanning segment; that stretch reads IPIGLVGSMVVTTVCYCLMAV. The Extracellular segment spans residues 319 to 348; that stretch reads TLCLMQPYQQIDPDAPFSVAFSAVGWDWAK. A helical membrane pass occupies residues 349–369; the sequence is YIVAFGALKGMTTVLLVGAIG. At 370-393 the chain is on the cytoplasmic side; the sequence is QARYMTHIARAHMMPPWLAQVNAK. The helical transmembrane segment at 394–414 threads the bilayer; sequence TGTPINATVVMLAATALIAFF. At 415–418 the chain is on the extracellular side; it reads TKLK. A helical membrane pass occupies residues 419 to 439; that stretch reads ILADLLSVSTLFIFMFVAVAL. The Cytoplasmic segment spans residues 440 to 457; sequence LVRRYYVTGETSTRDRNK. The chain crosses the membrane as a helical span at residues 458–478; it reads FLVFLGLILASSTATAVYWAL. Residues 479–483 lie on the Extracellular side of the membrane; that stretch reads EEEGW. Residues 484 to 504 form a helical membrane-spanning segment; sequence IGYCITVPIWFLSTVAMKFLV. Residues 505 to 511 lie on the Cytoplasmic side of the membrane; the sequence is PQARAPK. A helical transmembrane segment spans residues 512-532; it reads IWGVPLVPWLPSASIAINIFL. The Extracellular portion of the chain corresponds to 533-543; the sequence is LGSIDTKSFVR. A helical membrane pass occupies residues 544 to 564; that stretch reads FAIWTGILLIYYVLFGLHATY. Residues 565-594 are Cytoplasmic-facing; the sequence is DTAKATLKEKQALQKAEEGGVVADNSCSAT.

It belongs to the amino acid-polyamine-organocation (APC) superfamily. Cationic amino acid transporter (CAT) (TC 2.A.3.3) family. Expressed in roots, stems, flowers, petioles, seeds, siliques, and leaves. Mostly present in major veins.

The protein resides in the membrane. Its activity is regulated as follows. Inhibited by the protonophore 2,4-dinitrophenol. Its function is as follows. High-affinity permease involved in the transport of the cationic amino acids (e.g. arginine, lysine, histidine, citrulline, valine, and glutamate). Transport mostly basic amino acids, and, to a lower extent neutral and acidic amino acids. May function as a proton symporter. This chain is Cationic amino acid transporter 1 (CAT1), found in Arabidopsis thaliana (Mouse-ear cress).